Consider the following 369-residue polypeptide: GTPase Obg (369 aa).

The 159-residue stretch at Met-1–Leu-159 folds into the Obg domain. Positions Leu-128–Gly-147 are disordered. One can recognise an OBG-type G domain in the interval Ala-160–Ala-334. Residues Gly-166–Ser-173, Phe-191–Ala-195, Asp-213–Gly-216, Asn-284–Asp-287, and Ser-315–Leu-317 each bind GTP. Residues Ser-173 and Thr-193 each contribute to the Mg(2+) site.

It belongs to the TRAFAC class OBG-HflX-like GTPase superfamily. OBG GTPase family. In terms of assembly, monomer. The cofactor is Mg(2+).

It localises to the cytoplasm. Its function is as follows. An essential GTPase which binds GTP, GDP and possibly (p)ppGpp with moderate affinity, with high nucleotide exchange rates and a fairly low GTP hydrolysis rate. Plays a role in control of the cell cycle, stress response, ribosome biogenesis and in those bacteria that undergo differentiation, in morphogenesis control. This Burkholderia multivorans (strain ATCC 17616 / 249) protein is GTPase Obg.